Consider the following 168-residue polypeptide: Segregation and condensation protein B (168 aa).

This sequence belongs to the ScpB family. As to quaternary structure, homodimer. Homodimerization may be required to stabilize the binding of ScpA to the Smc head domains. Component of a cohesin-like complex composed of ScpA, ScpB and the Smc homodimer, in which ScpA and ScpB bind to the head domain of Smc. The presence of the three proteins is required for the association of the complex with DNA.

Its subcellular location is the cytoplasm. Functionally, participates in chromosomal partition during cell division. May act via the formation of a condensin-like complex containing Smc and ScpA that pull DNA away from mid-cell into both cell halves. This chain is Segregation and condensation protein B, found in Caldanaerobacter subterraneus subsp. tengcongensis (strain DSM 15242 / JCM 11007 / NBRC 100824 / MB4) (Thermoanaerobacter tengcongensis).